Consider the following 289-residue polypeptide: Protoheme IX farnesyltransferase (289 aa).

9 helical membrane-spanning segments follow: residues 13 to 33 (LIKP…LYLA), 40 to 60 (VFLI…SFIF), 85 to 105 (ISIP…FYML), 111 to 131 (LLTA…YTIF), 139 to 159 (NIVI…AAIG), 168 to 188 (ILFT…AIFL), 212 to 232 (SIFF…FLEP), 234 to 254 (MGLL…ILSY), and 269 to 289 (FLFS…DHMI).

Belongs to the UbiA prenyltransferase family. Protoheme IX farnesyltransferase subfamily.

The protein resides in the cell inner membrane. The catalysed reaction is heme b + (2E,6E)-farnesyl diphosphate + H2O = Fe(II)-heme o + diphosphate. Its pathway is porphyrin-containing compound metabolism; heme O biosynthesis; heme O from protoheme: step 1/1. In terms of biological role, converts heme B (protoheme IX) to heme O by substitution of the vinyl group on carbon 2 of heme B porphyrin ring with a hydroxyethyl farnesyl side group. The polypeptide is Protoheme IX farnesyltransferase (Leptospira borgpetersenii serovar Hardjo-bovis (strain JB197)).